The primary structure comprises 308 residues: Elongation factor Ts (308 aa).

The interval 80–83 is involved in Mg(2+) ion dislocation from EF-Tu; it reads TDFV.

Belongs to the EF-Ts family.

The protein localises to the cytoplasm. Functionally, associates with the EF-Tu.GDP complex and induces the exchange of GDP to GTP. It remains bound to the aminoacyl-tRNA.EF-Tu.GTP complex up to the GTP hydrolysis stage on the ribosome. In Rhizobium etli (strain ATCC 51251 / DSM 11541 / JCM 21823 / NBRC 15573 / CFN 42), this protein is Elongation factor Ts.